Here is a 316-residue protein sequence, read N- to C-terminus: Acetyl-coenzyme A carboxylase carboxyl transferase subunit alpha (316 aa).

A CoA carboxyltransferase C-terminal domain is found at 40–290; that stretch reads KARKELQRIY…RERFAHHLQE (251 aa).

Belongs to the AccA family. In terms of assembly, acetyl-CoA carboxylase is a heterohexamer composed of biotin carboxyl carrier protein (AccB), biotin carboxylase (AccC) and two subunits each of ACCase subunit alpha (AccA) and ACCase subunit beta (AccD).

The protein resides in the cytoplasm. It catalyses the reaction N(6)-carboxybiotinyl-L-lysyl-[protein] + acetyl-CoA = N(6)-biotinyl-L-lysyl-[protein] + malonyl-CoA. It functions in the pathway lipid metabolism; malonyl-CoA biosynthesis; malonyl-CoA from acetyl-CoA: step 1/1. Component of the acetyl coenzyme A carboxylase (ACC) complex. First, biotin carboxylase catalyzes the carboxylation of biotin on its carrier protein (BCCP) and then the CO(2) group is transferred by the carboxyltransferase to acetyl-CoA to form malonyl-CoA. This chain is Acetyl-coenzyme A carboxylase carboxyl transferase subunit alpha, found in Acidithiobacillus ferrooxidans (strain ATCC 23270 / DSM 14882 / CIP 104768 / NCIMB 8455) (Ferrobacillus ferrooxidans (strain ATCC 23270)).